Reading from the N-terminus, the 351-residue chain is Soluble TNF receptor II (351 aa).

The N-terminal stretch at 1–19 (MKSVLYSYILFLSCIIING) is a signal peptide. TNFR-Cys repeat units follow at residues 31–67 (KCKD…NTQC) and 69–110 (PCGS…NRIC). Cystine bridges form between Cys32–Cys43, Cys44–Cys57, Cys47–Cys67, Cys70–Cys85, Cys88–Cys102, and Cys92–Cys110. 3 N-linked (GlcNAc...) asparagine; by host glycosylation sites follow: Asn103, Asn191, and Asn250.

Belongs to the orthopoxvirus OPG002 family.

It localises to the secreted. Inhibits host immune defense by binding to host TNF and various chemokines in the extracellular space. Binds host CC chemokines (beta chemokines) and CXC chemokines (alpha chemokines). The chain is Soluble TNF receptor II (OPG002) from Bos taurus (Bovine).